Consider the following 375-residue polypeptide: MQKLQIFVYIYLFMLTVAGPVDLNENSEQKENVEKKGLCNACLWRQNNKSSRLEAIKIQILSKLRLETAPNISKDAIRQLLPKAPPLRELIDQYDVQRDDSSDGSLEDDDYHVTTETVITMPTESDFLAEVQEKPKCCFFKFSSKIQHNKVIKAQLWIYLRPVKTPTTVFVQILRLIKPMKDGTRYTGIRSLKLDMNPGTGIWQSIDVKTVLQNWLKQPESNLGIEIKALDENGHDLAVTFPEPGEEGLNPFLEVKVTDTPKRARRDFGLDCDEHSTESRCCRYPLTVDFEAFGWDWIIAPKRYKANYCSGECEFLFLQKYPHTHLVHQANPKGSAGPCCTPTKMSPINMLYFNGKEQIIYGKIPGMVVDRCGCS.

The first 18 residues, Met1 to Ala18, serve as a signal peptide directing secretion. The propeptide occupies Gly19–Arg266. Residues Asn48 and Asn71 are each glycosylated (N-linked (GlcNAc...) asparagine). Cystine bridges form between Cys272-Cys282, Cys281-Cys340, Cys309-Cys372, and Cys313-Cys374.

The protein belongs to the TGF-beta family. Homodimer; disulfide-linked. Interacts with WFIKKN2, leading to inhibit its activity. Interacts with FSTL3. Post-translationally, synthesized as large precursor molecule that undergoes proteolytic cleavage to generate an N-terminal propeptide and a disulfide linked C-terminal dimer, which is the biologically active molecule. The circulating form consists of a latent complex of the C-terminal dimer and other proteins, including its propeptide, which maintain the C-terminal dimer in a latent, inactive state. Ligand activation requires additional cleavage of the prodomain by a tolloid-like metalloproteinase.

The protein resides in the secreted. Acts specifically as a negative regulator of skeletal muscle growth. This Sylvicapra grimmia (Grey duiker) protein is Growth/differentiation factor 8 (MSTN).